The following is a 180-amino-acid chain: ATP-dependent protease subunit HslV (180 aa).

Threonine 7 is a catalytic residue. Alanine 162, cysteine 165, and threonine 168 together coordinate Na(+).

Belongs to the peptidase T1B family. HslV subfamily. As to quaternary structure, a double ring-shaped homohexamer of HslV is capped on each side by a ring-shaped HslU homohexamer. The assembly of the HslU/HslV complex is dependent on binding of ATP.

The protein resides in the cytoplasm. It catalyses the reaction ATP-dependent cleavage of peptide bonds with broad specificity.. Its activity is regulated as follows. Allosterically activated by HslU binding. In terms of biological role, protease subunit of a proteasome-like degradation complex believed to be a general protein degrading machinery. The sequence is that of ATP-dependent protease subunit HslV from Dichelobacter nodosus (strain VCS1703A).